The sequence spans 208 residues: U11/U12 small nuclear ribonucleoprotein 35 kDa protein (208 aa).

An RRM domain is found at 50–128 (LTLFVARLNP…YELLVDVEQE (79 aa)). The segment at 133 to 208 (GWRPRRLGGG…TEDRTHRHTY (76 aa)) is disordered. The span at 171 to 208 (RPAEPRGRETERERDRRDYRDRRHERTHTEDRTHRHTY) shows a compositional bias: basic and acidic residues.

The protein localises to the nucleus. This is U11/U12 small nuclear ribonucleoprotein 35 kDa protein (snrnp35) from Danio rerio (Zebrafish).